Consider the following 244-residue polypeptide: Protein FAM168A (244 aa).

Residue Met1 is modified to N-acetylmethionine. Arg102 carries the asymmetric dimethylarginine modification. Residues 107-126 (TPYKVPPTQSNTAPPPYSPS) form a disordered region.

The protein belongs to the FAM168 family. Interacts with POLB. Interacts with AKT1 and MT1X. May interact with FAM168B.

Functionally, in cancer context, protects cells from induced-DNA damage and apoptosis. Acts, at least in part, through PI3K/AKT/NFKB signaling pathway and by preventing POLB degradation. Decreases POLB ubiquitation and stabilizes its protein levels. The sequence is that of Protein FAM168A (Fam168a) from Mus musculus (Mouse).